Reading from the N-terminus, the 201-residue chain is Glycerol-3-phosphate acyltransferase (201 aa).

6 consecutive transmembrane segments (helical) span residues 10–30 (MLIG…GLIL), 60–80 (LAAA…LIAA), 86–106 (AAIA…WIGF), 116–136 (LGVL…AWIV), 139–159 (LLTR…PIAL), and 166–186 (ALAA…RANI).

The protein belongs to the PlsY family. In terms of assembly, probably interacts with PlsX.

The protein localises to the cell inner membrane. The enzyme catalyses an acyl phosphate + sn-glycerol 3-phosphate = a 1-acyl-sn-glycero-3-phosphate + phosphate. It participates in lipid metabolism; phospholipid metabolism. In terms of biological role, catalyzes the transfer of an acyl group from acyl-phosphate (acyl-PO(4)) to glycerol-3-phosphate (G3P) to form lysophosphatidic acid (LPA). This enzyme utilizes acyl-phosphate as fatty acyl donor, but not acyl-CoA or acyl-ACP. This chain is Glycerol-3-phosphate acyltransferase, found in Brucella ovis (strain ATCC 25840 / 63/290 / NCTC 10512).